The sequence spans 237 residues: MNKYEIIANEMRNRIKNNVYPIDQPIPDEVSLAKEFNSSRMTMKRALDNLVAEGLLFRKRGHGTFIIQSAIQDDHVHVVSNEILGLTNLLKDKKIKSKVIQFEVQFPTEEVAAHLSIDQKTPVYYVVRLRIVEGEPYVLEKTYMPTHLIPGINDDVLHDSIYNHITNVLQLKIAGTHRKIRACKSDHIDQQHLGCKQDDPILEVEHVGFLDTGIPFEYSFSRHRHDKFVVTSVNIRR.

An HTH gntR-type domain is found at 1–69; the sequence is MNKYEIIANE…RGHGTFIIQS (69 aa). Residues 29-48 constitute a DNA-binding region (H-T-H motif); the sequence is EVSLAKEFNSSRMTMKRALD.

The protein localises to the cytoplasm. In terms of biological role, transcriptional repressor of the gmuBACDREFG operon which is involved in the uptake and degradation of glucomannan. This is HTH-type transcriptional regulator GmuR (gmuR) from Bacillus subtilis (strain 168).